The sequence spans 281 residues: NADPH-dependent 7-cyano-7-deazaguanine reductase (281 aa).

Residue 88–90 (IES) participates in substrate binding. 90–91 (SK) lines the NADPH pocket. Cys-189 functions as the Thioimide intermediate in the catalytic mechanism. Asp-196 (proton donor) is an active-site residue. 228 to 229 (HE) is a substrate binding site. 257-258 (RG) contacts NADPH.

The protein belongs to the GTP cyclohydrolase I family. QueF type 2 subfamily. Homodimer.

The protein localises to the cytoplasm. The enzyme catalyses 7-aminomethyl-7-carbaguanine + 2 NADP(+) = 7-cyano-7-deazaguanine + 2 NADPH + 3 H(+). It participates in tRNA modification; tRNA-queuosine biosynthesis. In terms of biological role, catalyzes the NADPH-dependent reduction of 7-cyano-7-deazaguanine (preQ0) to 7-aminomethyl-7-deazaguanine (preQ1). This Yersinia pseudotuberculosis serotype O:1b (strain IP 31758) protein is NADPH-dependent 7-cyano-7-deazaguanine reductase.